A 90-amino-acid chain; its full sequence is Probable Fe(2+)-trafficking protein (90 aa).

It belongs to the Fe(2+)-trafficking protein family. In terms of assembly, monomer.

Could be a mediator in iron transactions between iron acquisition and iron-requiring processes, such as synthesis and/or repair of Fe-S clusters in biosynthetic enzymes. The polypeptide is Probable Fe(2+)-trafficking protein (Hamiltonella defensa subsp. Acyrthosiphon pisum (strain 5AT)).